The chain runs to 130 residues: Fluoride-specific ion channel FluC (130 aa).

A run of 4 helical transmembrane segments spans residues 7-27, 36-56, 69-89, and 99-119; these read VLAI…LGLW, LGTL…VAVF, ALIT…AEVV, and LGFG…LAGI. Na(+)-binding residues include G76 and T79.

This sequence belongs to the fluoride channel Fluc/FEX (TC 1.A.43) family.

The protein resides in the cell inner membrane. The enzyme catalyses fluoride(in) = fluoride(out). Its activity is regulated as follows. Na(+) is not transported, but it plays an essential structural role and its presence is essential for fluoride channel function. Its function is as follows. Fluoride-specific ion channel. Important for reducing fluoride concentration in the cell, thus reducing its toxicity. This Albidiferax ferrireducens (strain ATCC BAA-621 / DSM 15236 / T118) (Rhodoferax ferrireducens) protein is Fluoride-specific ion channel FluC.